The chain runs to 387 residues: Beta-carotene 4-ketolase (387 aa).

The disordered stretch occupies residues 1-78 (MPHSIDMEDS…GNPTVDDASQ (78 aa)). 2 stretches are compositionally biased toward polar residues: residues 43–53 (NWQTQYHSSEG) and 65–78 (DATT…DASQ).

It catalyses the reaction echinenone + 2 AH2 + 2 O2 = canthaxanthin + 2 A + 3 H2O. The catalysed reaction is all-trans-beta-carotene + 2 AH2 + 2 O2 = echinenone + 2 A + 3 H2O. It participates in carotenoid biosynthesis. Its function is as follows. Involved in the biosynthesis of ketocarotenoids which are powerful anti-oxidative molecules. Catalyzes the conversion of beta-carotene to canthaxanthin via echinenone. The protein is Beta-carotene 4-ketolase of Protosiphon botryoides (Green alga).